The following is a 625-amino-acid chain: Phosphomethylpyrimidine synthase (625 aa).

Residues asparagine 230, methionine 259, tyrosine 288, histidine 324, serine 344–glycine 346, aspartate 385–arginine 388, and glutamate 424 contribute to the substrate site. Histidine 428 contributes to the Zn(2+) binding site. Tyrosine 451 is a binding site for substrate. Histidine 492 provides a ligand contact to Zn(2+). Residues cysteine 572, cysteine 575, and cysteine 580 each contribute to the [4Fe-4S] cluster site.

Belongs to the ThiC family. As to quaternary structure, homodimer. [4Fe-4S] cluster is required as a cofactor.

The enzyme catalyses 5-amino-1-(5-phospho-beta-D-ribosyl)imidazole + S-adenosyl-L-methionine = 4-amino-2-methyl-5-(phosphooxymethyl)pyrimidine + CO + 5'-deoxyadenosine + formate + L-methionine + 3 H(+). Its pathway is cofactor biosynthesis; thiamine diphosphate biosynthesis. Its function is as follows. Catalyzes the synthesis of the hydroxymethylpyrimidine phosphate (HMP-P) moiety of thiamine from aminoimidazole ribotide (AIR) in a radical S-adenosyl-L-methionine (SAM)-dependent reaction. The protein is Phosphomethylpyrimidine synthase of Xanthomonas axonopodis pv. citri (strain 306).